Consider the following 954-residue polypeptide: Valine--tRNA ligase (954 aa).

The 'HIGH' region signature appears at 48-58; that stretch reads PNVTGSLHMGH. Positions 560–564 match the 'KMSKS' region motif; sequence KMSKS. K563 provides a ligand contact to ATP. The stretch at 883–954 forms a coiled coil; it reads AGFINKEAEL…QTQYQAIENL (72 aa).

This sequence belongs to the class-I aminoacyl-tRNA synthetase family. ValS type 1 subfamily. In terms of assembly, monomer.

The protein localises to the cytoplasm. It catalyses the reaction tRNA(Val) + L-valine + ATP = L-valyl-tRNA(Val) + AMP + diphosphate. Functionally, catalyzes the attachment of valine to tRNA(Val). As ValRS can inadvertently accommodate and process structurally similar amino acids such as threonine, to avoid such errors, it has a 'posttransfer' editing activity that hydrolyzes mischarged Thr-tRNA(Val) in a tRNA-dependent manner. The chain is Valine--tRNA ligase from Actinobacillus pleuropneumoniae serotype 3 (strain JL03).